The sequence spans 359 residues: 3-dehydroquinate synthase (359 aa).

Residues aspartate 71–lysine 76, glycine 105–aspartate 109, threonine 129–threonine 130, lysine 142, lysine 151, and cysteine 169–threonine 172 each bind NAD(+). The Zn(2+) site is built by glutamate 184, histidine 247, and histidine 264.

The protein belongs to the sugar phosphate cyclases superfamily. Dehydroquinate synthase family. NAD(+) is required as a cofactor. Requires Co(2+) as cofactor. Zn(2+) serves as cofactor.

Its subcellular location is the cytoplasm. It catalyses the reaction 7-phospho-2-dehydro-3-deoxy-D-arabino-heptonate = 3-dehydroquinate + phosphate. It participates in metabolic intermediate biosynthesis; chorismate biosynthesis; chorismate from D-erythrose 4-phosphate and phosphoenolpyruvate: step 2/7. Its function is as follows. Catalyzes the conversion of 3-deoxy-D-arabino-heptulosonate 7-phosphate (DAHP) to dehydroquinate (DHQ). This chain is 3-dehydroquinate synthase, found in Shewanella oneidensis (strain ATCC 700550 / JCM 31522 / CIP 106686 / LMG 19005 / NCIMB 14063 / MR-1).